The chain runs to 439 residues: uncharacterized protein (439 aa).

Residues 65–208 enclose the DAGKc domain; that stretch reads TRPKRVFVLV…VYAFELTTEG (144 aa).

This is an uncharacterized protein from Caenorhabditis elegans.